A 346-amino-acid polypeptide reads, in one-letter code: Cytochrome c551 peroxidase (346 aa).

Positions 1–23 are cleaved as a signal peptide; the sequence is MQSSQLLPLGSLLLSFATPLAQA. The heme c site is built by Cys-74, Cys-77, His-78, Cys-220, Cys-223, His-224, His-284, and Met-298.

Requires heme c as cofactor. Binds 2 heme groups per subunit. Sequencing of the whole protein indicates about 20% starts on Val-247.

Its subcellular location is the periplasm. It carries out the reaction 2 Fe(II)-[cytochrome c] + H2O2 + 2 H(+) = 2 Fe(III)-[cytochrome c] + 2 H2O. In terms of biological role, catalyzes the peroxidative oxidation of azurin and cytochrome c551. Likely to provide protection against toxic peroxides. This Pseudomonas aeruginosa (strain ATCC 15692 / DSM 22644 / CIP 104116 / JCM 14847 / LMG 12228 / 1C / PRS 101 / PAO1) protein is Cytochrome c551 peroxidase (ccpA).